A 371-amino-acid chain; its full sequence is Partitioning defective 6 homolog beta (371 aa).

Ser10 and Ser11 each carry phosphoserine. The PB1 domain occupies 16–96 (TMEVKSKFGA…PLLRIFIQKK (81 aa)). The segment at 126–253 (RKKPHIVISM…ITVRPANQRN (128 aa)) is interaction with PARD3 and CDC42. Residues 133-150 (ISMPQDFRPVSSIIDVDI) form the Pseudo-CRIB domain. The region spanning 157 to 250 (RVRLYKYGTE…NLIITVRPAN (94 aa)) is the PDZ domain. Disordered regions lie at residues 253-273 (NNVV…DNSL) and 326-371 (FESG…IITL). Polar residues predominate over residues 326 to 340 (FESGQNGFSPPQDTS). A compositionally biased stretch (basic and acidic residues) spans 352–363 (LESRAPDQKLLE).

It belongs to the PAR6 family. In terms of assembly, interacts with PARD3. Interacts with GTP-bound forms of CDC42, RHOQ/TC10 and RAC1. Interacts with the N-terminal part of PRKCI and PRKCZ. Part of a complex with PARD3, CDC42 or RAC1 and PRKCI or PRKCZ. Part of a complex with LLGL1 and PRKCI. Interacts with ALS2CR19. Interacts with ECT2. Interacts with PALS1. As to expression, expressed in pancreas and in both adult and fetal kidney. Weakly expressed in placenta and lung. Not expressed in other tissues.

It localises to the cytoplasm. Its subcellular location is the cell membrane. It is found in the cell junction. The protein localises to the tight junction. Functionally, adapter protein involved in asymmetrical cell division and cell polarization processes. Probably involved in formation of epithelial tight junctions. Association with PARD3 may prevent the interaction of PARD3 with F11R/JAM1, thereby preventing tight junction assembly. The PARD6-PARD3 complex links GTP-bound Rho small GTPases to atypical protein kinase C proteins. In Mus musculus (Mouse), this protein is Partitioning defective 6 homolog beta (Pard6b).